A 37-amino-acid polypeptide reads, in one-letter code: Large ribosomal subunit protein bL36c (37 aa).

It belongs to the bacterial ribosomal protein bL36 family.

The protein localises to the plastid. Its subcellular location is the chloroplast. This Physcomitrium patens (Spreading-leaved earth moss) protein is Large ribosomal subunit protein bL36c.